Here is a 575-residue protein sequence, read N- to C-terminus: Sialate:O-sulfotransferase 1 (575 aa).

Residues M1–R14 are Cytoplasmic-facing. A helical; Signal-anchor for type II membrane protein membrane pass occupies residues T15–L35. Residues Q36 to R575 are Extracellular-facing. WSC domains follow at residues R142–D234 and T245–C340. N-linked (GlcNAc...) asparagine glycans are attached at residues N257 and N348.

Belongs to the WSCD family.

The protein localises to the golgi apparatus membrane. The enzyme catalyses a ganglioside GM1b + 3'-phosphoadenylyl sulfate = an 8-O-sulfo-ganglioside GM1b + adenosine 3',5'-bisphosphate + H(+). In terms of biological role, sialate:O-sulfotransferase which catalyzes 8-O-sulfation at the Sia-glycan level using 3'-phosphoadenosine 5'-phosphosulfate (PAPS) as a donor, forming 8-O-sulfated Sia (Sia8S)-glycans. Displays selectivity toward glycolipids such as GM1 gangliosides. The sequence is that of Sialate:O-sulfotransferase 1 (WSCD1) from Homo sapiens (Human).